The chain runs to 819 residues: Ent-beyerene synthase KSL2, chloroplastic (819 aa).

A chloroplast-targeting transit peptide spans 1 to 58 (MLPCLFPAYGSVVACKPSAIDRSPFGLLSQPKQTNRTLIRRPKVTKAFMAIEAMRHCS). Residues 58–76 (SSSSSSEEGGAAATTAARS) show a composition bias toward low complexity. The segment at 58-77 (SSSSSSEEGGAAATTAARSA) is disordered. Mg(2+) is bound by residues D567, D571, N711, S715, and E719. The DDXXD motif signature appears at 567–571 (DDFFD).

The protein belongs to the terpene synthase family. It depends on Mg(2+) as a cofactor. As to expression, expressed in roots. Highly expressed in stems, flowers and panicle.

Its subcellular location is the plastid. It is found in the chloroplast. It catalyses the reaction ent-copalyl diphosphate = ent-beyerene + diphosphate. The enzyme catalyses ent-copalyl diphosphate = ent-kaur-16-ene + diphosphate. Its pathway is secondary metabolite biosynthesis; terpenoid biosynthesis. In terms of biological role, diterpene cyclase involved in jasmonic acid-dependent defense mechanisms in roots by mediating the biosynthesis of labdane-related diterpenoids (LRDs) natural products such as ent-beyerene, an antimicrobial compound. Catalyzes the cyclization of ent-CDP into ent-beyerene as a major and ent-kaurene as a minor product. May be involved in the catalysis of an early step of the gibberellin (GA) biosynthesis pathway. The protein is Ent-beyerene synthase KSL2, chloroplastic of Oryza sativa subsp. japonica (Rice).